We begin with the raw amino-acid sequence, 661 residues long: UvrABC system protein B (661 aa).

The region spanning 26 to 413 is the Helicase ATP-binding domain; the sequence is KGINEGRKHQ…TPEMVEQIIR (388 aa). 39 to 46 provides a ligand contact to ATP; that stretch reads GATGTGKT. The Beta-hairpin motif lies at 92 to 115; sequence YYDYYQPEAYVPQTDTFIEKDASI. In terms of domain architecture, Helicase C-terminal spans 430 to 596; it reads QIDDLIGEIQ…TINKKIRDVI (167 aa). In terms of domain architecture, UVR spans 625 to 660; the sequence is EKVIAQMESDMKEAAKALDFERAAELRDLLLELKSE.

Belongs to the UvrB family. Forms a heterotetramer with UvrA during the search for lesions. Interacts with UvrC in an incision complex.

Its subcellular location is the cytoplasm. The UvrABC repair system catalyzes the recognition and processing of DNA lesions. A damage recognition complex composed of 2 UvrA and 2 UvrB subunits scans DNA for abnormalities. Upon binding of the UvrA(2)B(2) complex to a putative damaged site, the DNA wraps around one UvrB monomer. DNA wrap is dependent on ATP binding by UvrB and probably causes local melting of the DNA helix, facilitating insertion of UvrB beta-hairpin between the DNA strands. Then UvrB probes one DNA strand for the presence of a lesion. If a lesion is found the UvrA subunits dissociate and the UvrB-DNA preincision complex is formed. This complex is subsequently bound by UvrC and the second UvrB is released. If no lesion is found, the DNA wraps around the other UvrB subunit that will check the other stand for damage. In Bacillus licheniformis (strain ATCC 14580 / DSM 13 / JCM 2505 / CCUG 7422 / NBRC 12200 / NCIMB 9375 / NCTC 10341 / NRRL NRS-1264 / Gibson 46), this protein is UvrABC system protein B.